Here is a 537-residue protein sequence, read N- to C-terminus: Pentatricopeptide repeat-containing protein At4g32450, mitochondrial (537 aa).

A mitochondrion-targeting transit peptide spans 1–110 (MIYTLTRGSL…EHSEIINQRN (110 aa)). Positions 113 to 140 (WQSSDGCSSYGTTGNGVPQENNTGGNHF) are enriched in polar residues. The segment at 113–148 (WQSSDGCSSYGTTGNGVPQENNTGGNHFQQDHSGHS) is disordered. PPR repeat units lie at residues 145–179 (SGHSSLDELDSICREGKVKKAVEIIKSWRNEGYVV), 180–210 (DLPRLFWIAQLCGDAQALQEAKVVHEFITSS), 215–249 (DISAYNSIIEMYSGCGSVEDALTVFNSMPERNLET), 250–280 (WCGVIRCFAKNGQGEDAIDTFSRFKQEGNKP), 281–316 (DGEMFKEIFFACGVLGDMNEGLLHFESMYKEYGIIP), and 317–347 (CMEHYVSLVKMLAEPGYLDEALRFVESMEPN). Residues 412–442 (YGIRYMAAGDISRPENRELYMALKSLKEHMI) form a type E(+) motif region. Residues 443–537 (EIGYVPLSKL…DGVCSCREYW (95 aa)) are type DYW motif.

The protein belongs to the PPR family. PCMP-H subfamily.

The protein resides in the mitochondrion. The sequence is that of Pentatricopeptide repeat-containing protein At4g32450, mitochondrial (PCMP-H63) from Arabidopsis thaliana (Mouse-ear cress).